The sequence spans 331 residues: Glyceraldehyde-3-phosphate dehydrogenase 3 (331 aa).

NAD(+) contacts are provided by residues 11–12, Asp33, and Glu77; that span reads RI. Phosphoserine is present on Ser148. Residue 148-150 participates in D-glyceraldehyde 3-phosphate binding; sequence SCT. The Nucleophile role is filled by Cys149. Residue Ser177 is modified to Phosphoserine. Thr179 is a D-glyceraldehyde 3-phosphate binding site. Position 200 is a phosphoserine (Ser200). D-glyceraldehyde 3-phosphate-binding positions include 208–209 and Arg231; that span reads TG. Residue Asn313 coordinates NAD(+).

Belongs to the glyceraldehyde-3-phosphate dehydrogenase family. As to quaternary structure, homotetramer.

It localises to the cytoplasm. It carries out the reaction D-glyceraldehyde 3-phosphate + phosphate + NAD(+) = (2R)-3-phospho-glyceroyl phosphate + NADH + H(+). It participates in carbohydrate degradation; glycolysis; pyruvate from D-glyceraldehyde 3-phosphate: step 1/5. The chain is Glyceraldehyde-3-phosphate dehydrogenase 3 from Kluyveromyces marxianus (Yeast).